Consider the following 297-residue polypeptide: N-acetylneuraminate lyase (297 aa).

Aceneuramate-binding residues include Ser-47 and Thr-48. Tyr-137 serves as the catalytic Proton donor. Lys-165 acts as the Schiff-base intermediate with substrate in catalysis. Thr-167, Gly-189, Asp-191, Glu-192, and Ser-208 together coordinate aceneuramate.

The protein belongs to the DapA family. NanA subfamily. In terms of assembly, homotetramer.

Its subcellular location is the cytoplasm. The catalysed reaction is aceneuramate = aldehydo-N-acetyl-D-mannosamine + pyruvate. Its pathway is amino-sugar metabolism; N-acetylneuraminate degradation; D-fructose 6-phosphate from N-acetylneuraminate: step 1/5. Functionally, catalyzes the reversible aldol cleavage of N-acetylneuraminic acid (sialic acid; Neu5Ac) to form pyruvate and N-acetylmannosamine (ManNAc) via a Schiff base intermediate. This Enterobacter sp. (strain 638) protein is N-acetylneuraminate lyase.